We begin with the raw amino-acid sequence, 484 residues long: Putative myrosinase 6 (484 aa).

Residue Asn-28 is glycosylated (N-linked (GlcNAc...) asparagine). A beta-D-glucoside is bound by residues Gln-39, His-140, and 184–185 (NQ). Cysteines 204 and 207 form a disulfide. An N-linked (GlcNAc...) asparagine glycan is attached at Asn-260. Residues Tyr-321, Trp-440, 447–448 (EF), and Phe-456 contribute to the a beta-D-glucoside site. The N-linked (GlcNAc...) asparagine glycan is linked to Asn-462.

Belongs to the glycosyl hydrolase 1 family.

The enzyme catalyses a thioglucoside + H2O = a sugar + a thiol.. This chain is Putative myrosinase 6, found in Arabidopsis thaliana (Mouse-ear cress).